The sequence spans 104 residues: Replication restart protein PriB (104 aa).

The region spanning 1 to 101 (MTNRLVLSGT…LHAEQIELID (101 aa)) is the SSB domain.

It belongs to the PriB family. Homodimer. Interacts with PriA and DnaT. Component of the replication restart primosome. Primosome assembly occurs via a 'hand-off' mechanism. PriA binds to replication forks, subsequently PriB then DnaT bind; DnaT then displaces ssDNA to generate the helicase loading substrate.

In terms of biological role, involved in the restart of stalled replication forks, which reloads the replicative helicase on sites other than the origin of replication; the PriA-PriB pathway is the major replication restart pathway. During primosome assembly it facilitates complex formation between PriA and DnaT on DNA; stabilizes PriA on DNA. Stimulates the DNA unwinding activity of PriA helicase. The protein is Replication restart protein PriB of Escherichia coli (strain ATCC 8739 / DSM 1576 / NBRC 3972 / NCIMB 8545 / WDCM 00012 / Crooks).